The sequence spans 490 residues: Protein nucleotidyltransferase YdiU (490 aa).

8 residues coordinate ATP: Gly86, Gly88, Arg89, Lys109, Asp121, Gly122, Arg172, and Arg179. Asp248 acts as the Proton acceptor in catalysis. Asn249 and Asp258 together coordinate Mg(2+). Asp258 is an ATP binding site.

It belongs to the SELO family. Mg(2+) serves as cofactor. Mn(2+) is required as a cofactor.

The catalysed reaction is L-seryl-[protein] + ATP = 3-O-(5'-adenylyl)-L-seryl-[protein] + diphosphate. It catalyses the reaction L-threonyl-[protein] + ATP = 3-O-(5'-adenylyl)-L-threonyl-[protein] + diphosphate. The enzyme catalyses L-tyrosyl-[protein] + ATP = O-(5'-adenylyl)-L-tyrosyl-[protein] + diphosphate. It carries out the reaction L-histidyl-[protein] + UTP = N(tele)-(5'-uridylyl)-L-histidyl-[protein] + diphosphate. The catalysed reaction is L-seryl-[protein] + UTP = O-(5'-uridylyl)-L-seryl-[protein] + diphosphate. It catalyses the reaction L-tyrosyl-[protein] + UTP = O-(5'-uridylyl)-L-tyrosyl-[protein] + diphosphate. In terms of biological role, nucleotidyltransferase involved in the post-translational modification of proteins. It can catalyze the addition of adenosine monophosphate (AMP) or uridine monophosphate (UMP) to a protein, resulting in modifications known as AMPylation and UMPylation. This Rhizobium meliloti (strain 1021) (Ensifer meliloti) protein is Protein nucleotidyltransferase YdiU.